Here is a 290-residue protein sequence, read N- to C-terminus: Probable aquaporin PIP2-7 (290 aa).

Transmembrane regions (helical) follow at residues 45–65 and 79–99; these read ALIA…ATVI and GVGY…LVYC. The NPA 1 signature appears at 109 to 111; sequence NPA. The next 3 helical transmembrane spans lie at 128 to 148, 168 to 188, and 202 to 222; these read VLYV…VKGI, SAAG…YTVF, and IPVL…LATI. Residues 230–232 carry the NPA 2 motif; the sequence is NPA. A helical transmembrane segment spans residues 252 to 272; that stretch reads IFWVGPVIGAFLAAAYHKLVL.

It belongs to the MIP/aquaporin (TC 1.A.8) family. PIP (TC 1.A.8.11) subfamily. As to expression, expressed in roots.

It is found in the cell membrane. In terms of biological role, aquaporins facilitate the transport of water and small neutral solutes across cell membranes. This chain is Probable aquaporin PIP2-7 (PIP2-7), found in Oryza sativa subsp. japonica (Rice).